The primary structure comprises 475 residues: Aspartyl/glutamyl-tRNA(Asn/Gln) amidotransferase subunit B (475 aa).

It belongs to the GatB/GatE family. GatB subfamily. In terms of assembly, heterotrimer of A, B and C subunits.

The catalysed reaction is L-glutamyl-tRNA(Gln) + L-glutamine + ATP + H2O = L-glutaminyl-tRNA(Gln) + L-glutamate + ADP + phosphate + H(+). It carries out the reaction L-aspartyl-tRNA(Asn) + L-glutamine + ATP + H2O = L-asparaginyl-tRNA(Asn) + L-glutamate + ADP + phosphate + 2 H(+). Allows the formation of correctly charged Asn-tRNA(Asn) or Gln-tRNA(Gln) through the transamidation of misacylated Asp-tRNA(Asn) or Glu-tRNA(Gln) in organisms which lack either or both of asparaginyl-tRNA or glutaminyl-tRNA synthetases. The reaction takes place in the presence of glutamine and ATP through an activated phospho-Asp-tRNA(Asn) or phospho-Glu-tRNA(Gln). The polypeptide is Aspartyl/glutamyl-tRNA(Asn/Gln) amidotransferase subunit B (Staphylococcus saprophyticus subsp. saprophyticus (strain ATCC 15305 / DSM 20229 / NCIMB 8711 / NCTC 7292 / S-41)).